Reading from the N-terminus, the 366-residue chain is Peptide chain release factor 2 (366 aa).

At Q253 the chain carries N5-methylglutamine.

This sequence belongs to the prokaryotic/mitochondrial release factor family. Methylated by PrmC. Methylation increases the termination efficiency of RF2.

The protein resides in the cytoplasm. Peptide chain release factor 2 directs the termination of translation in response to the peptide chain termination codons UGA and UAA. In Yersinia pseudotuberculosis serotype I (strain IP32953), this protein is Peptide chain release factor 2.